Here is a 417-residue protein sequence, read N- to C-terminus: NADH-quinone oxidoreductase subunit D (417 aa).

It belongs to the complex I 49 kDa subunit family. NDH-1 is composed of 14 different subunits. Subunits NuoB, C, D, E, F, and G constitute the peripheral sector of the complex.

Its subcellular location is the cell inner membrane. It catalyses the reaction a quinone + NADH + 5 H(+)(in) = a quinol + NAD(+) + 4 H(+)(out). NDH-1 shuttles electrons from NADH, via FMN and iron-sulfur (Fe-S) centers, to quinones in the respiratory chain. The immediate electron acceptor for the enzyme in this species is believed to be ubiquinone. Couples the redox reaction to proton translocation (for every two electrons transferred, four hydrogen ions are translocated across the cytoplasmic membrane), and thus conserves the redox energy in a proton gradient. The chain is NADH-quinone oxidoreductase subunit D from Coxiella burnetii (strain RSA 331 / Henzerling II).